A 279-amino-acid polypeptide reads, in one-letter code: uncharacterized protein (279 aa).

Residues Ile14–Thr71 enclose the HTH lysR-type domain. Positions Gln31–Lys50 form a DNA-binding region, H-T-H motif.

It belongs to the LysR transcriptional regulatory family.

This is an uncharacterized protein from Methanocaldococcus jannaschii (strain ATCC 43067 / DSM 2661 / JAL-1 / JCM 10045 / NBRC 100440) (Methanococcus jannaschii).